Reading from the N-terminus, the 150-residue chain is Ribosome maturation factor RimP (150 aa).

This sequence belongs to the RimP family.

The protein localises to the cytoplasm. In terms of biological role, required for maturation of 30S ribosomal subunits. The protein is Ribosome maturation factor RimP of Acidithiobacillus ferrooxidans (strain ATCC 23270 / DSM 14882 / CIP 104768 / NCIMB 8455) (Ferrobacillus ferrooxidans (strain ATCC 23270)).